A 51-amino-acid polypeptide reads, in one-letter code: Ribosome biogenesis protein Nop10 (51 aa).

The protein belongs to the NOP10 family.

Involved in ribosome biogenesis; more specifically in 18S rRNA pseudouridylation and in cleavage of pre-rRNA. The sequence is that of Ribosome biogenesis protein Nop10 from Methanococcus maripaludis (strain C5 / ATCC BAA-1333).